A 505-amino-acid chain; its full sequence is Lysine--tRNA ligase (505 aa).

Mg(2+) contacts are provided by Glu-415 and Glu-422.

The protein belongs to the class-II aminoacyl-tRNA synthetase family. Homodimer. Mg(2+) serves as cofactor.

It is found in the cytoplasm. It carries out the reaction tRNA(Lys) + L-lysine + ATP = L-lysyl-tRNA(Lys) + AMP + diphosphate. This Salmonella paratyphi C (strain RKS4594) protein is Lysine--tRNA ligase.